Consider the following 693-residue polypeptide: Glycine--tRNA ligase beta subunit (693 aa).

Belongs to the class-II aminoacyl-tRNA synthetase family. In terms of assembly, tetramer of two alpha and two beta subunits.

The protein resides in the cytoplasm. The catalysed reaction is tRNA(Gly) + glycine + ATP = glycyl-tRNA(Gly) + AMP + diphosphate. The polypeptide is Glycine--tRNA ligase beta subunit (Vibrio vulnificus (strain CMCP6)).